We begin with the raw amino-acid sequence, 143 residues long: Putative pre-16S rRNA nuclease (143 aa).

Belongs to the YqgF nuclease family.

It localises to the cytoplasm. In terms of biological role, could be a nuclease involved in processing of the 5'-end of pre-16S rRNA. The protein is Putative pre-16S rRNA nuclease of Lactococcus lactis subsp. cremoris (strain SK11).